A 328-amino-acid polypeptide reads, in one-letter code: 2,3-diketo-L-gulonate-binding periplasmic protein YiaO (328 aa).

Residues 1–24 (MKLRSVTYALFIAGLAAFSTSSLA) form the signal peptide.

In terms of assembly, the complex comprises the extracytoplasmic solute receptor protein YiaO, and the two transmembrane proteins YiaM and YiaN.

It is found in the periplasm. Part of the tripartite ATP-independent periplasmic (TRAP) transport system YiaMNO involved in the uptake of 2,3-diketo-L-gulonate. This protein specifically binds 2,3-diketo-L-gulonate. Is not able to bind either L-ascorbate or dehydroascorbate. This is 2,3-diketo-L-gulonate-binding periplasmic protein YiaO (yiaO) from Escherichia coli (strain K12).